The following is a 344-amino-acid chain: Phenylalanine--tRNA ligase alpha subunit (344 aa).

Glu-255 serves as a coordination point for Mg(2+).

This sequence belongs to the class-II aminoacyl-tRNA synthetase family. Phe-tRNA synthetase alpha subunit type 1 subfamily. As to quaternary structure, tetramer of two alpha and two beta subunits. Requires Mg(2+) as cofactor.

It localises to the cytoplasm. It catalyses the reaction tRNA(Phe) + L-phenylalanine + ATP = L-phenylalanyl-tRNA(Phe) + AMP + diphosphate + H(+). The polypeptide is Phenylalanine--tRNA ligase alpha subunit (Persephonella marina (strain DSM 14350 / EX-H1)).